A 140-amino-acid polypeptide reads, in one-letter code: Large ribosomal subunit protein uL16 (140 aa).

It belongs to the universal ribosomal protein uL16 family. Part of the 50S ribosomal subunit.

In terms of biological role, binds 23S rRNA and is also seen to make contacts with the A and possibly P site tRNAs. The sequence is that of Large ribosomal subunit protein uL16 from Geotalea uraniireducens (strain Rf4) (Geobacter uraniireducens).